The primary structure comprises 126 residues: Transcription antitermination protein NusB (126 aa).

The protein belongs to the NusB family.

In terms of biological role, involved in transcription antitermination. Required for transcription of ribosomal RNA (rRNA) genes. Binds specifically to the boxA antiterminator sequence of the ribosomal RNA (rrn) operons. In Oceanobacillus iheyensis (strain DSM 14371 / CIP 107618 / JCM 11309 / KCTC 3954 / HTE831), this protein is Transcription antitermination protein NusB.